Here is a 369-residue protein sequence, read N- to C-terminus: Glutamate 5-kinase (369 aa).

Lys-11 contacts ATP. Ser-51, Asp-138, and Asn-150 together coordinate substrate. ATP contacts are provided by residues 170 to 171 (TD) and 212 to 218 (TGGMATK). Positions 277–355 (KGSIVIDEGA…QDIYAVLGYE (79 aa)) constitute a PUA domain.

The protein belongs to the glutamate 5-kinase family.

It localises to the cytoplasm. It carries out the reaction L-glutamate + ATP = L-glutamyl 5-phosphate + ADP. Its pathway is amino-acid biosynthesis; L-proline biosynthesis; L-glutamate 5-semialdehyde from L-glutamate: step 1/2. Functionally, catalyzes the transfer of a phosphate group to glutamate to form L-glutamate 5-phosphate. The chain is Glutamate 5-kinase from Aliivibrio fischeri (strain ATCC 700601 / ES114) (Vibrio fischeri).